Here is a 504-residue protein sequence, read N- to C-terminus: Glucose-6-phosphate isomerase (504 aa).

The active-site Proton donor is glutamate 333. Active-site residues include histidine 364 and lysine 473.

It belongs to the GPI family.

The protein localises to the cytoplasm. It carries out the reaction alpha-D-glucose 6-phosphate = beta-D-fructose 6-phosphate. Its pathway is carbohydrate biosynthesis; gluconeogenesis. It participates in carbohydrate degradation; glycolysis; D-glyceraldehyde 3-phosphate and glycerone phosphate from D-glucose: step 2/4. Functionally, catalyzes the reversible isomerization of glucose-6-phosphate to fructose-6-phosphate. This chain is Glucose-6-phosphate isomerase, found in Xanthomonas campestris pv. campestris (strain B100).